The primary structure comprises 117 residues: Immunoglobulin heavy variable 1-58 (117 aa).

The first 19 residues, 1–19 (MDWIWRILFLVGAATGAHS), serve as a signal peptide directing secretion. Residues 20-44 (QMQLVQSGPEVKKPGTSVKVSCKAS) form a framework-1 region. Residues 20 to 117 (QMQLVQSGPE…EDTAVYYCAA (98 aa)) enclose the Ig-like domain. The cysteines at positions 41 and 115 are disulfide-linked. The segment at 45-52 (GFTFTSSA) is complementarity-determining-1. Positions 53–69 (VQWVRQARGQRLEWIGW) are framework-2. The segment at 70–77 (IVVGSGNT) is complementarity-determining-2. A framework-3 region spans residues 78–115 (NYAQKFQERVTITRDMSTSTAYMELSSLRSEDTAVYYC). The tract at residues 116–117 (AA) is complementarity-determining-3.

Immunoglobulins are composed of two identical heavy chains and two identical light chains; disulfide-linked.

It localises to the secreted. The protein localises to the cell membrane. Its function is as follows. V region of the variable domain of immunoglobulin heavy chains that participates in the antigen recognition. Immunoglobulins, also known as antibodies, are membrane-bound or secreted glycoproteins produced by B lymphocytes. In the recognition phase of humoral immunity, the membrane-bound immunoglobulins serve as receptors which, upon binding of a specific antigen, trigger the clonal expansion and differentiation of B lymphocytes into immunoglobulins-secreting plasma cells. Secreted immunoglobulins mediate the effector phase of humoral immunity, which results in the elimination of bound antigens. The antigen binding site is formed by the variable domain of one heavy chain, together with that of its associated light chain. Thus, each immunoglobulin has two antigen binding sites with remarkable affinity for a particular antigen. The variable domains are assembled by a process called V-(D)-J rearrangement and can then be subjected to somatic hypermutations which, after exposure to antigen and selection, allow affinity maturation for a particular antigen. The protein is Immunoglobulin heavy variable 1-58 of Homo sapiens (Human).